The sequence spans 152 residues: Transcriptional regulator MraZ (152 aa).

SpoVT-AbrB domains follow at residues 5–52 (ANAI…PLNE) and 81–124 (ATES…DEDM).

The protein belongs to the MraZ family. As to quaternary structure, forms oligomers.

The protein resides in the cytoplasm. It localises to the nucleoid. In Psychromonas ingrahamii (strain DSM 17664 / CCUG 51855 / 37), this protein is Transcriptional regulator MraZ.